Reading from the N-terminus, the 209-residue chain is Dual-specificity protein phosphatase SDP1 (209 aa).

Residues 1 to 11 are compositionally biased toward polar residues; it reads MNIYTSPTRTP. Residues 1–43 form a disordered region; it reads MNIYTSPTRTPNIAPKSGQRPSLPMLATDERSTDKESPNEDRE. Positions 28–43 are enriched in basic and acidic residues; that stretch reads TDERSTDKESPNEDRE. A disulfide bridge connects residues Cys-47 and Cys-142. Positions 59–196 constitute a Tyrosine-protein phosphatase domain; the sequence is GPLLVLPEKI…LMEWEVALNA (138 aa). Position 111 (His-111) interacts with 4-O-phospho-L-tyrosine. Catalysis depends on Cys-140, which acts as the Phosphocysteine intermediate.

Belongs to the protein-tyrosine phosphatase family. Non-receptor class dual specificity subfamily.

The enzyme catalyses O-phospho-L-tyrosyl-[protein] + H2O = L-tyrosyl-[protein] + phosphate. Its function is as follows. Mediates dephosphorylation of MAPK substrates such as SLT2, acquiring enhanced catalytic activity under oxidative conditions. This is Dual-specificity protein phosphatase SDP1 (SDP1) from Saccharomyces cerevisiae (strain ATCC 204508 / S288c) (Baker's yeast).